The following is a 199-amino-acid chain: Superoxide dismutase [Mn/Fe] 2 (199 aa).

Fe(3+) contacts are provided by His27, His81, Asp161, and His165. 4 residues coordinate Mn(2+): His27, His81, Asp161, and His165.

Belongs to the iron/manganese superoxide dismutase family. Homodimer. Can also form a heterodimer with SodA. The cofactor is Mn(2+). Fe(3+) serves as cofactor.

The catalysed reaction is 2 superoxide + 2 H(+) = H2O2 + O2. Its function is as follows. Destroys superoxide anion radicals which are normally produced within the cells and which are toxic to biological systems. Catalyzes the dismutation of superoxide anion radicals into O2 and H2O2 by successive reduction and oxidation of the transition metal ion at the active site. This Staphylococcus aureus (strain USA300) protein is Superoxide dismutase [Mn/Fe] 2 (sodM).